A 250-amino-acid chain; its full sequence is Cobalt transport protein CbiM (250 aa).

The N-terminal stretch at 1–26 (MNKKEKRIVAIAAAFALCFGISPAVN) is a signal peptide. 6 helical membrane-spanning segments follow: residues 38–58 (KYCI…YFSI), 68–88 (SITM…LKIP), 102–122 (LGAI…VLIF), 134–154 (TLGA…FGIY), 165–185 (LSGI…VTSI), and 209–229 (FAPT…VIMI).

It belongs to the CbiM family. In terms of assembly, forms an energy-coupling factor (ECF) transporter complex composed of an ATP-binding protein (A component, CbiO), a transmembrane protein (T component, CbiQ) and 2 possible substrate-capture proteins (S components, CbiM and CbiN) of unknown stoichimetry.

The protein resides in the cell membrane. Its pathway is cofactor biosynthesis; adenosylcobalamin biosynthesis. Part of the energy-coupling factor (ECF) transporter complex CbiMNOQ involved in cobalt import. The protein is Cobalt transport protein CbiM of Lachnoclostridium phytofermentans (strain ATCC 700394 / DSM 18823 / ISDg) (Clostridium phytofermentans).